The primary structure comprises 367 residues: D-alanine--D-alanine ligase (367 aa).

One can recognise an ATP-grasp domain in the interval 150–357 (KKLLTAAGLP…YPTLLATMVE (208 aa)). 178–233 (RERLGLPVFVKPSRGGSSIGVSRVTAWDALPAAIELARRHDPKVIVEAAIPGRELE) provides a ligand contact to ATP. The Mg(2+) site is built by aspartate 312, glutamate 324, and asparagine 326.

The protein belongs to the D-alanine--D-alanine ligase family. It depends on Mg(2+) as a cofactor. The cofactor is Mn(2+).

It is found in the cytoplasm. It carries out the reaction 2 D-alanine + ATP = D-alanyl-D-alanine + ADP + phosphate + H(+). It functions in the pathway cell wall biogenesis; peptidoglycan biosynthesis. Its function is as follows. Cell wall formation. In Mycolicibacterium vanbaalenii (strain DSM 7251 / JCM 13017 / BCRC 16820 / KCTC 9966 / NRRL B-24157 / PYR-1) (Mycobacterium vanbaalenii), this protein is D-alanine--D-alanine ligase.